Reading from the N-terminus, the 288-residue chain is GCN5-related N-acetyltransferase 6, chloroplastic (288 aa).

The transit peptide at 1 to 111 directs the protein to the chloroplast; the sequence is MSTISIHRTE…YWTAAWLRAE (111 aa). In terms of domain architecture, N-acetyltransferase spans 151–288; the sequence is SCIVAVKKEE…DDTYLLQYTS (138 aa). Acetyl-CoA-binding positions include 215–217, 223–228, 254–256, and Tyr-261; these read LCV, RQGIAC, and NSV. Catalysis depends on Tyr-261, which acts as the Proton donor.

It belongs to the acetyltransferase family. GNAT subfamily. Oligomer. Autoacetylated. In terms of tissue distribution, expressed in green tissues and in roots.

It localises to the plastid. Its subcellular location is the chloroplast. The protein localises to the cytoplasm. The protein resides in the perinuclear region. The enzyme catalyses an N-terminal L-alpha-aminoacyl-[protein] + acetyl-CoA = N-terminal N(alpha)-acetyl-L-alpha-aminoacyl-[protein] + CoA + H(+). The catalysed reaction is L-lysyl-[protein] + acetyl-CoA = N(6)-acetyl-L-lysyl-[protein] + CoA + H(+). It catalyses the reaction N-terminal L-alanyl-[protein] + acetyl-CoA = N-terminal N(alpha)-acetyl-L-alanyl-[protein] + CoA + H(+). It carries out the reaction N-terminal L-seryl-[protein] + acetyl-CoA = N-terminal N(alpha)-acetyl-L-seryl-[protein] + CoA + H(+). The enzyme catalyses N-terminal L-threonyl-[protein] + acetyl-CoA = N-terminal N(alpha)-acetyl-L-threonyl-[protein] + CoA + H(+). The catalysed reaction is N-terminal L-methionyl-[protein] + acetyl-CoA = N-terminal N(alpha)-acetyl-L-methionyl-[protein] + CoA + H(+). It catalyses the reaction N-terminal L-valyl-[protein] + acetyl-CoA = N-terminal N(alpha)-acetyl-L-valyl-[protein] + CoA + H(+). Its function is as follows. Protein acetyltransferase with dual specificity triggering both N-alpha-acetylation (NTA), with a large spectrum of modified N-termini, including methionine, alanine, serine, threonine and to a lower extent valine as substrates, and epsilon-lysine acetylation (KA). This is GCN5-related N-acetyltransferase 6, chloroplastic from Arabidopsis thaliana (Mouse-ear cress).